We begin with the raw amino-acid sequence, 647 residues long: MPDPATYRPAPGSIPVEPGVYRFRDPHGRVIYVGKAKSLRSRLTSYFADIAHLQPRTRQMVTTAAKVEWTVVNTEVEALQLEYNWIKEFDPRFNVRYRDDKSYPVLAVTLNEDFPRLMVYRGPRRKGVRYFGPYSHAWAIRETVDLLTRVFPARTCSMGVFKRHKQIDRPCLLGYIDKCSAPCIGRVSKEQHRQIVDDFCDFLSGKTDRYARELEQQMNAAAENLDFERAARLRDDRSALKRAMEKQAVVLGDGTDADVVAFADDELEAAVQVFHVRGGRVRGQRGWVVEKPSAPDVSVEEQLVEQFLAQFYGDQAELGGAADESVNPVPREVLVPCLPSNADQLSSWLSGLRGSRVTLRVPRRGDKRALAETVQRNAKEALQQHKLKRAGDFNARSAALQNIQEALGLADAPLRIECVDISHVQGTDVVASLVVFEDGLPRKSDYRHFAIREAAGQGRSDDVASIAEVTRRRFQRHLSEQNDPNLLSPEGKSRRFAYPPNLYVVDGGAPQVNAASAVLEELGIVDVAVIGLAKRLEEVWVPSEPDPIIMPRNSEGLYLLQRVRDEAHRFAITYHRSKRSKRMTASALDAVPGLGEHRRKALVTHFGSIARLKEATVDQITAVPGIGVATATAVLEALRPDQPGGAQ.

One can recognise a GIY-YIG domain in the interval 16–95 (VEPGVYRFRD…IKEFDPRFNV (80 aa)). Positions 208 to 243 (DRYARELEQQMNAAAENLDFERAARLRDDRSALKRA) constitute a UVR domain.

The protein belongs to the UvrC family. In terms of assembly, interacts with UvrB in an incision complex.

Its subcellular location is the cytoplasm. Functionally, the UvrABC repair system catalyzes the recognition and processing of DNA lesions. UvrC both incises the 5' and 3' sides of the lesion. The N-terminal half is responsible for the 3' incision and the C-terminal half is responsible for the 5' incision. In Mycobacterium marinum (strain ATCC BAA-535 / M), this protein is UvrABC system protein C.